We begin with the raw amino-acid sequence, 409 residues long: Bone morphogenetic protein 4 (409 aa).

The N-terminal stretch at 1–24 (MIPGNRMLMVVLLCQVLLGGASHA) is a signal peptide. The propeptide occupies 25–293 (SLIPETGKKK…ALTRRRRAKR (269 aa)). A Phosphoserine modification is found at Ser-91. Asn-144 and Asn-209 each carry an N-linked (GlcNAc...) asparagine glycan. Residues 284-308 (ALTRRRRAKRSPKHHPQRARKKNKN) are disordered. 3 disulfide bridges follow: Cys-309–Cys-374, Cys-338–Cys-406, and Cys-342–Cys-408. 2 N-linked (GlcNAc...) asparagine glycosylation sites follow: Asn-351 and Asn-366.

The protein belongs to the TGF-beta family. Homodimer; disulfide-linked. Interacts with GREM2. Part of a complex consisting of TWSG1 and CHRD. Interacts with the serine proteases, HTRA1 and HTRA3; the interaction with either inhibits BMP4-mediated signaling. The HTRA protease activity is required for this inhibition. Interacts with SOSTDC1. Interacts with FBN1 (via N-terminal domain) and FBN2. Interacts with type I receptor BMPR1A. Interacts with type II receptor BMPR2. Interacts with FSTL1; this interaction inhibits the activation of the BMP4/Smad1/5/8 signaling pathway. Interacts with SCUBE3. Interacts with TGFBR3.

The protein localises to the secreted. The protein resides in the extracellular space. It localises to the extracellular matrix. Its function is as follows. Growth factor of the TGF-beta superfamily that plays essential roles in many developmental processes, including neurogenesis, vascular development, angiogenesis and osteogenesis. Acts in concert with PTHLH/PTHRP to stimulate ductal outgrowth during embryonic mammary development and to inhibit hair follicle induction. Initiates the canonical BMP signaling cascade by associating with type I receptor BMPR1A and type II receptor BMPR2. Once all three components are bound together in a complex at the cell surface, BMPR2 phosphorylates and activates BMPR1A. In turn, BMPR1A propagates signal by phosphorylating SMAD1/5/8 that travel to the nucleus and act as activators and repressors of transcription of target genes. Positively regulates the expression of odontogenic development regulator MSX1 via inducing the IPO7-mediated import of SMAD1 to the nucleus. Required for MSX1-mediated mesenchymal molar tooth bud development beyond the bud stage, via promoting Wnt signaling. Acts as a positive regulator of odontoblast differentiation during mesenchymal tooth germ formation, expression is repressed during the bell stage by MSX1-mediated inhibition of CTNNB1 signaling. Able to induce its own expression in dental mesenchymal cells and also in the neighboring dental epithelial cells via an MSX1-mediated pathway. Can also signal through non-canonical BMP pathways such as ERK/MAP kinase, PI3K/Akt, or SRC cascades. For example, induces SRC phosphorylation which, in turn, activates VEGFR2, leading to an angiogenic response. In Bos taurus (Bovine), this protein is Bone morphogenetic protein 4.